A 368-amino-acid polypeptide reads, in one-letter code: Phosphoribosylformylglycinamidine cyclo-ligase (368 aa).

The protein belongs to the AIR synthase family.

It localises to the cytoplasm. It carries out the reaction 2-formamido-N(1)-(5-O-phospho-beta-D-ribosyl)acetamidine + ATP = 5-amino-1-(5-phospho-beta-D-ribosyl)imidazole + ADP + phosphate + H(+). Its pathway is purine metabolism; IMP biosynthesis via de novo pathway; 5-amino-1-(5-phospho-D-ribosyl)imidazole from N(2)-formyl-N(1)-(5-phospho-D-ribosyl)glycinamide: step 2/2. The protein is Phosphoribosylformylglycinamidine cyclo-ligase of Novosphingobium aromaticivorans (strain ATCC 700278 / DSM 12444 / CCUG 56034 / CIP 105152 / NBRC 16084 / F199).